We begin with the raw amino-acid sequence, 439 residues long: MKNIIKHDAYDKKAYERFLKNSKYLQKLISYYSQYHPIHEKLAEDTFYAFFKYVVEFNEYVEEKFKINKAILEGAIKNIEYEKSKLLTELDEVNAGTATIMFCEKFFENLKLAKLNKELKKFASEGKGEGLEDKLKEIAKNTMKDIAEEVSEVIQGFNAVENFGKGEGDKKLLSPEDRIKLADKILQNKKIREIVKKLGKLRLLAINEYKSKIKHYSGEIYSTKIGRDLKHLLPKEIVNLSDEILYYDFLRRFVDKKLLIYDIQNKLEKQKGPIIILLDHSGSMYGDREIWGKAVALSIIEIAKRENRDIYYIAFDDGVRFEKKINPKTITFDEIIEIASLYFGGGTNFIMPLNRAMSIIKEHETFKNADILLITDGYAEVNDVFLKEFDKFKNEYNAKLISVFVETFPTETLKAISDEVIKVYDLADEEARKIYKSIS.

The region spanning 273–439 is the VWFA domain; sequence PIIILLDHSG…EARKIYKSIS (167 aa).

This is an uncharacterized protein from Methanocaldococcus jannaschii (strain ATCC 43067 / DSM 2661 / JAL-1 / JCM 10045 / NBRC 100440) (Methanococcus jannaschii).